We begin with the raw amino-acid sequence, 488 residues long: B-type flagellin (488 aa).

The protein belongs to the bacterial flagellin family. In terms of processing, phosphorylated on tyrosine residue(s).

Its subcellular location is the secreted. The protein resides in the bacterial flagellum. Its function is as follows. Flagellin is the subunit protein which polymerizes to form the filaments of bacterial flagella. The chain is B-type flagellin (fliC) from Pseudomonas aeruginosa (strain ATCC 15692 / DSM 22644 / CIP 104116 / JCM 14847 / LMG 12228 / 1C / PRS 101 / PAO1).